Consider the following 199-residue polypeptide: Recombination protein RecR (199 aa).

A C4-type zinc finger spans residues 57–72; sequence CEICGNMDTKNICHIC. The 96-residue stretch at 80-175 folds into the Toprim domain; that stretch reads STIAIVETVA…KISRLASGIP (96 aa).

This sequence belongs to the RecR family.

May play a role in DNA repair. It seems to be involved in an RecBC-independent recombinational process of DNA repair. It may act with RecF and RecO. In Rickettsia typhi (strain ATCC VR-144 / Wilmington), this protein is Recombination protein RecR.